Reading from the N-terminus, the 116-residue chain is Aspartate 1-decarboxylase (116 aa).

Residue S25 is the Schiff-base intermediate with substrate; via pyruvic acid of the active site. S25 is modified (pyruvic acid (Ser)). T57 is a binding site for substrate. The active-site Proton donor is the Y58. Residue 73–75 (GAA) participates in substrate binding.

This sequence belongs to the PanD family. As to quaternary structure, heterooctamer of four alpha and four beta subunits. The cofactor is pyruvate. Post-translationally, is synthesized initially as an inactive proenzyme, which is activated by self-cleavage at a specific serine bond to produce a beta-subunit with a hydroxyl group at its C-terminus and an alpha-subunit with a pyruvoyl group at its N-terminus.

It is found in the cytoplasm. It carries out the reaction L-aspartate + H(+) = beta-alanine + CO2. Its pathway is cofactor biosynthesis; (R)-pantothenate biosynthesis; beta-alanine from L-aspartate: step 1/1. In terms of biological role, catalyzes the pyruvoyl-dependent decarboxylation of aspartate to produce beta-alanine. This is Aspartate 1-decarboxylase from Parabacteroides distasonis (strain ATCC 8503 / DSM 20701 / CIP 104284 / JCM 5825 / NCTC 11152).